The primary structure comprises 251 residues: MSGHSKWATTKHKKAIIDGRRAKSFAKLIKNIEVAARMGGPDLAGNPGLELAVTKAKKTSVPNDNIDRAIKRGAGLTGEVVDYTEIMYEARGPQGSALLIECLTDNKNRAASEVRLAISRNGGTIADPGSVSYLFARKGVVVLPKNGLSEDDILMAVLEAGAEEVKDSGENWEIHSEPSDLQAIRDALKEAGIDYETDEAEFVPSMQVDLDVDGAKKFMKLVDALEDLDDVQNVYSNADLSEEVQAALDSE.

The protein belongs to the TACO1 family.

Its subcellular location is the cytoplasm. This Paenarthrobacter aurescens (strain TC1) protein is Probable transcriptional regulatory protein AAur_2300.